The following is a 251-amino-acid chain: 2,3-bisphosphoglycerate-dependent phosphoglycerate mutase 2 (251 aa).

Substrate is bound by residues 8 to 15 (RHGESTWN), 21 to 22 (TG), arginine 60, 87 to 90 (ERHY), lysine 98, 114 to 115 (RR), and 183 to 184 (GN). Histidine 9 acts as the Tele-phosphohistidine intermediate in catalysis. Glutamate 87 functions as the Proton donor/acceptor in the catalytic mechanism.

Belongs to the phosphoglycerate mutase family. BPG-dependent PGAM subfamily. In terms of assembly, homodimer.

The catalysed reaction is (2R)-2-phosphoglycerate = (2R)-3-phosphoglycerate. Its pathway is carbohydrate degradation; glycolysis; pyruvate from D-glyceraldehyde 3-phosphate: step 3/5. In terms of biological role, catalyzes the interconversion of 2-phosphoglycerate and 3-phosphoglycerate. The sequence is that of 2,3-bisphosphoglycerate-dependent phosphoglycerate mutase 2 from Nitrosospira multiformis (strain ATCC 25196 / NCIMB 11849 / C 71).